The following is a 294-amino-acid chain: Potassium-transporting ATPase subunit beta (294 aa).

At 1–36 the chain is on the cytoplasmic side; the sequence is MAALQEKKSCSQRMAEFRQYCWNPDTGQMLGRTPAR. A helical; Signal-anchor for type II membrane protein membrane pass occupies residues 37-57; that stretch reads WVWISLYYAAFYVVMTGLFAL. At 58 to 294 the chain is on the extracellular side; it reads CIYVLMQTID…KVEFKLTIQK (237 aa). 5 N-linked (GlcNAc...) asparagine glycosylation sites follow: Asn-99, Asn-103, Asn-130, Asn-146, and Asn-161. A disulfide bridge links Cys-131 with Cys-152. A disulfide bridge connects residues Cys-162 and Cys-178. Asn-193 and Asn-225 each carry an N-linked (GlcNAc...) asparagine glycan. The immunoglobulin-like stretch occupies residues 194–294; it reads NTAPRVDCTF…KVEFKLTIQK (101 aa). Cys-201 and Cys-266 are joined by a disulfide.

Belongs to the X(+)/potassium ATPases subunit beta family. In terms of assembly, the ATPase pump is composed of two subunits: alpha (catalytic) and beta (regulatory). Interacts with alpha subunit ATP12A; this interaction is required for the formation of a functionally active pump and targeting at the plasma membrane. Interacts (via N-terminus) with alpha subunit ATP4A (via the P-domain). N-glycosylation is necessary for assembly and functional expression of the pump at the plasma membrane. As to expression, stomach.

The protein resides in the apical cell membrane. It localises to the cell membrane. Functionally, the beta subunit of the gastric H(+)/K(+) ATPase pump which transports H(+) ions in exchange for K(+) ions across the apical membrane of parietal cells. Plays a structural and regulatory role in the assembly and membrane targeting of a functionally active pump. Within a transport cycle, the transfer of a H(+) ion across the membrane is coupled to ATP hydrolysis and is associated with a transient phosphorylation of the alpha subunit that shifts the pump conformation from inward-facing (E1) to outward-facing state (E2). Interacts with the phosphorylation domain of the alpha subunit and functions as a ratchet, stabilizing the lumenal-open E2 conformation and preventing the reverse reaction of the transport cycle. The protein is Potassium-transporting ATPase subunit beta (Atp4b) of Rattus norvegicus (Rat).